Consider the following 327-residue polypeptide: Pectate lyase A (327 aa).

The signal sequence occupies residues 1-19 (MQNLKFLIAAVSCLGPALA). Residue N99 is glycosylated (N-linked (GlcNAc...) asparagine). D140, D169, and D173 together coordinate Ca(2+). Residue R226 is part of the active site.

Belongs to the polysaccharide lyase 1 family. Ca(2+) is required as a cofactor.

Its subcellular location is the secreted. It carries out the reaction Eliminative cleavage of (1-&gt;4)-alpha-D-galacturonan to give oligosaccharides with 4-deoxy-alpha-D-galact-4-enuronosyl groups at their non-reducing ends.. Functionally, pectinolytic enzyme consist of four classes of enzymes: pectin lyase, polygalacturonase, pectin methylesterase and rhamnogalacturonase. Among pectinolytic enzymes, pectin lyase is the most important in depolymerization of pectin, since it cleaves internal glycosidic bonds of highly methylated pectins. Favors pectate, the anion, over pectin, the methyl ester. This Emericella nidulans (strain FGSC A4 / ATCC 38163 / CBS 112.46 / NRRL 194 / M139) (Aspergillus nidulans) protein is Pectate lyase A (plyA).